We begin with the raw amino-acid sequence, 25 residues long: Xenoposin precursor fragment R2 (25 aa).

As to expression, expressed by the skin glands.

The protein resides in the secreted. Antimicrobial peptide. This is Xenoposin precursor fragment R2 from Xenopus ruwenzoriensis (Uganda clawed frog).